The sequence spans 116 residues: U11-theraphotoxin-Hhn1b (116 aa).

A signal peptide spans 1-21; sequence MNTVRVAFLLVFVLAVSLGQA. Positions 22–74 are excised as a propeptide; it reads DKDENRMEMQEKTEQGKSYLDFAENLLLQKLEELEAKLLEEDSEESRNSRQKR. The tract at residues 61–83 is disordered; the sequence is EEDSEESRNSRQKRCIGEGVPCD. 3 disulfides stabilise this stretch: Cys-75/Cys-90, Cys-82/Cys-95, and Cys-89/Cys-110.

Belongs to the neurotoxin 14 (magi-1) family. 01 (HNTX-16) subfamily. In terms of tissue distribution, expressed by the venom gland.

Its subcellular location is the secreted. Its function is as follows. Probable ion channel inhibitor. The chain is U11-theraphotoxin-Hhn1b from Cyriopagopus hainanus (Chinese bird spider).